The following is a 61-amino-acid chain: Small ribosomal subunit protein uS14B (61 aa).

Cysteine 24, cysteine 27, cysteine 40, and cysteine 43 together coordinate Zn(2+).

This sequence belongs to the universal ribosomal protein uS14 family. Zinc-binding uS14 subfamily. In terms of assembly, part of the 30S ribosomal subunit. Contacts proteins S3 and S10. The cofactor is Zn(2+).

Binds 16S rRNA, required for the assembly of 30S particles and may also be responsible for determining the conformation of the 16S rRNA at the A site. In Kineococcus radiotolerans (strain ATCC BAA-149 / DSM 14245 / SRS30216), this protein is Small ribosomal subunit protein uS14B.